The sequence spans 85 residues: Neurotoxin beta-KTx 14.3 (85 aa).

The N-terminal stretch at 1 to 20 is a signal peptide; it reads MKQYIFFLALIVLTATFAEA. Residues 21 to 37 constitute a propeptide that is removed on maturation; sequence GKKTEILDKVKKVFSKG. The 37-residue stretch at 49–85 folds into the BetaSPN-type CS-alpha/beta domain; sequence ELGCPFIEKWCEDHCESKKQVGKCENFDCSCVKLGGK. 3 cysteine pairs are disulfide-bonded: cysteine 52–cysteine 72, cysteine 59–cysteine 77, and cysteine 63–cysteine 79.

It belongs to the long chain scorpion toxin family. Class 2 subfamily. As to expression, expressed by the venom gland.

It is found in the secreted. In terms of biological role, toxin with activity on voltage-gated potassium channels. Moderately and reversibly blocks up to 50% of the activity of Kv7.1/KCNQ1 (tested at 22 uM). 3D-structure modeling of the KCNQ1-toxin complex shows that the toxin interacts with the channel pore domain. Additionally, shows a very weak effect to block voltage-gated potassium channel Kv1.1/KCNA1. Its function is as follows. Has a very weak effect to block voltage-gated potassium channel Kv1.1/KCNA1. The sequence is that of Neurotoxin beta-KTx 14.3 from Lychas mucronatus (Chinese swimming scorpion).